We begin with the raw amino-acid sequence, 878 residues long: Bifunctional heparan sulfate N-deacetylase/N-sulfotransferase 1 (878 aa).

Over 1–17 (MSLSLKTRRFGRPVRPQ) the chain is Cytoplasmic. Positions 1 to 169 (MSLSLKTRRF…VEYGVGIIGF (169 aa)) are sufficient for localization to Golgi membrane. The helical; Signal-anchor for type II membrane protein transmembrane segment at 18–38 (LVLLLLFALCLLSVFISAYYL) threads the bilayer. Over 39-878 (YGWKRGLEPS…WLREELQNTR (840 aa)) the chain is Lumenal. The heparan sulfate N-deacetylase 1 stretch occupies residues 40–594 (GWKRGLEPSG…KRHKDIWSKE (555 aa)). 3 N-linked (GlcNAc...) asparagine glycosylation sites follow: asparagine 231, asparagine 347, and asparagine 397. Positions 595 to 878 (KTCDRFPKLL…WLREELQNTR (284 aa)) are heparan sulfate N-sulfotransferase 1. Residue lysine 610 is the For sulfotransferase activity of the active site. 610-614 (KTGTT) serves as a coordination point for adenosine 3',5'-bisphosphate. Asparagine 663 carries N-linked (GlcNAc...) asparagine glycosylation. 2 residues coordinate adenosine 3',5'-bisphosphate: serine 708 and tryptophan 813. A disulfide bond links cysteine 814 and cysteine 824. 829–833 (KGRKY) lines the adenosine 3',5'-bisphosphate pocket.

Belongs to the sulfotransferase 1 family. NDST subfamily. Monomer.

It is found in the golgi apparatus membrane. The protein localises to the golgi apparatus. It localises to the trans-Golgi network membrane. It catalyses the reaction alpha-D-glucosaminyl-[heparan sulfate](n) + 3'-phosphoadenylyl sulfate = N-sulfo-alpha-D-glucosaminyl-[heparan sulfate](n) + adenosine 3',5'-bisphosphate + 2 H(+). It functions in the pathway glycan metabolism; heparan sulfate biosynthesis. The protein operates within glycan metabolism; heparin biosynthesis. Its function is as follows. Essential bifunctional enzyme that catalyzes both the N-deacetylation and the N-sulfation of glucosamine (GlcNAc) of the glycosaminoglycan in heparan sulfate. Modifies the GlcNAc-GlcA disaccharide repeating sugar backbone to make N-sulfated heparosan, a prerequisite substrate for later modifications in heparin biosynthesis. Plays a role in determining the extent and pattern of sulfation of heparan sulfate. The chain is Bifunctional heparan sulfate N-deacetylase/N-sulfotransferase 1 (ndst1) from Xenopus laevis (African clawed frog).